A 119-amino-acid polypeptide reads, in one-letter code: Holo-[acyl-carrier-protein] synthase (119 aa).

Residues aspartate 6 and glutamate 51 each contribute to the Mg(2+) site.

It belongs to the P-Pant transferase superfamily. AcpS family. The cofactor is Mg(2+).

It localises to the cytoplasm. It catalyses the reaction apo-[ACP] + CoA = holo-[ACP] + adenosine 3',5'-bisphosphate + H(+). Functionally, transfers the 4'-phosphopantetheine moiety from coenzyme A to a Ser of acyl-carrier-protein. This is Holo-[acyl-carrier-protein] synthase from Sulfurovum sp. (strain NBC37-1).